A 1058-amino-acid polypeptide reads, in one-letter code: Carbamoyl phosphate synthase large chain (1058 aa).

A carboxyphosphate synthetic domain region spans residues 1 to 401; it reads MPKRTDIQKI…SLLKACRSLE (401 aa). 12 residues coordinate ATP: R129, R169, G175, G176, R208, I210, E215, G241, I242, H243, Q284, and E298. An ATP-grasp 1 domain is found at 133 to 327; that stretch reads KQLMEELEQP…IAKLAAKIAV (195 aa). Mg(2+) contacts are provided by Q284, E298, and N300. Positions 284, 298, and 300 each coordinate Mn(2+). The segment at 402 to 546 is oligomerization domain; it reads IGVHHNEIPE…YSTYGWENES (145 aa). A carbamoyl phosphate synthetic domain region spans residues 547–929; sequence IRSDKESVLV…ALYKAFEASY (383 aa). The region spanning 671-861 is the ATP-grasp 2 domain; that stretch reads EQALKELDIP…MAQVATKLIL (191 aa). R707, S746, I748, E752, G777, V778, H779, S780, Q820, and E832 together coordinate ATP. 3 residues coordinate Mg(2+): Q820, E832, and N834. Residues Q820, E832, and N834 each coordinate Mn(2+). The region spanning 930-1058 is the MGS-like domain; that stretch reads LHLPTFGNVV…ESRSFVTEAI (129 aa). Positions 930-1058 are allosteric domain; sequence LHLPTFGNVV…ESRSFVTEAI (129 aa).

It belongs to the CarB family. Composed of two chains; the small (or glutamine) chain promotes the hydrolysis of glutamine to ammonia, which is used by the large (or ammonia) chain to synthesize carbamoyl phosphate. Tetramer of heterodimers (alpha,beta)4. Mg(2+) is required as a cofactor. It depends on Mn(2+) as a cofactor.

The enzyme catalyses hydrogencarbonate + L-glutamine + 2 ATP + H2O = carbamoyl phosphate + L-glutamate + 2 ADP + phosphate + 2 H(+). It carries out the reaction hydrogencarbonate + NH4(+) + 2 ATP = carbamoyl phosphate + 2 ADP + phosphate + 2 H(+). Its pathway is amino-acid biosynthesis; L-arginine biosynthesis; carbamoyl phosphate from bicarbonate: step 1/1. It functions in the pathway pyrimidine metabolism; UMP biosynthesis via de novo pathway; (S)-dihydroorotate from bicarbonate: step 1/3. Its function is as follows. Large subunit of the glutamine-dependent carbamoyl phosphate synthetase (CPSase). CPSase catalyzes the formation of carbamoyl phosphate from the ammonia moiety of glutamine, carbonate, and phosphate donated by ATP, constituting the first step of 2 biosynthetic pathways, one leading to arginine and/or urea and the other to pyrimidine nucleotides. The large subunit (synthetase) binds the substrates ammonia (free or transferred from glutamine from the small subunit), hydrogencarbonate and ATP and carries out an ATP-coupled ligase reaction, activating hydrogencarbonate by forming carboxy phosphate which reacts with ammonia to form carbamoyl phosphate. The chain is Carbamoyl phosphate synthase large chain from Streptococcus pneumoniae (strain P1031).